The following is a 415-amino-acid chain: Leucine-rich repeat-containing protein 34 (415 aa).

LRR repeat units follow at residues 246–272 and 274–296; these read SLRY…LKSN and TLEV…LSET.

As to quaternary structure, interacts with NPM1 and NCL. As to expression, expressed in testis where it specifically localizes to germ cells (at protein level). Not detected in other tissues tested (at protein level). Expressed in pluripotent embryonic stem cells and multipotent adult germline stem cells.

The protein localises to the nucleus. It localises to the nucleolus. Its subcellular location is the cytoplasm. In terms of biological role, highly expressed in stem cells where it may be involved in regulation of pluripotency. In embryonic stem cells (ESCs), important for normal expression of the pluripotency regulators POU5F1/OCT4 and KLF4. Also important for expression of the ectodermal marker gene NES and the endodermal marker gene GATA4. Promotes stem cell proliferation in vitro. In Mus musculus (Mouse), this protein is Leucine-rich repeat-containing protein 34.